The chain runs to 327 residues: DNA-directed RNA polymerase subunit alpha (327 aa).

Residues 1–233 (MVREKVKVST…NLFIPFLHVE (233 aa)) are alpha N-terminal domain (alpha-NTD). The tract at residues 267–327 (LAFQYIFIDQ…KKILDILEKK (61 aa)) is alpha C-terminal domain (alpha-CTD).

Belongs to the RNA polymerase alpha chain family. In plastids the minimal PEP RNA polymerase catalytic core is composed of four subunits: alpha, beta, beta', and beta''. When a (nuclear-encoded) sigma factor is associated with the core the holoenzyme is formed, which can initiate transcription.

The protein localises to the plastid. Its subcellular location is the chloroplast. It catalyses the reaction RNA(n) + a ribonucleoside 5'-triphosphate = RNA(n+1) + diphosphate. DNA-dependent RNA polymerase catalyzes the transcription of DNA into RNA using the four ribonucleoside triphosphates as substrates. In Crucihimalaya wallichii (Rock-cress), this protein is DNA-directed RNA polymerase subunit alpha.